We begin with the raw amino-acid sequence, 853 residues long: Stachyose synthase (853 aa).

A propeptide spanning residues 1-11 (MAPPLNSTTSN) is cleaved from the precursor.

The protein belongs to the glycosyl hydrolases 36 family.

It is found in the cytoplasm. It catalyses the reaction alpha-D-galactosyl-(1-&gt;3)-1D-myo-inositol + raffinose = stachyose + myo-inositol. Its pathway is glycan metabolism; stachyose biosynthesis; stachyose from raffinose: step 1/1. Its function is as follows. Catalyzes stachyose synthesis by transfer of a galactosyl moiety from galactinol to raffinose. Also catalyzes verbascose synthesis by galactosyl transfer from galactinol to stachyose or from one stachyose molecule to another. Oligosaccharides of the raffinose family play a protective role in maturation drying of seeds. They may act as cryoprotectants in frost-hardy plants. This chain is Stachyose synthase (STS1), found in Pisum sativum (Garden pea).